Here is a 1807-residue protein sequence, read N- to C-terminus: Triacetic acid lactone synthase cle1 (1807 aa).

Residues 107–280 (LAPLTVIIHI…ANVPVNGRYH (174 aa)) enclose the Starter acyltransferase (SAT) domain. The 411-residue stretch at 385–795 (DTSIAIIGAA…GNNTAIIICQ (411 aa)) folds into the Ketosynthase family 3 (KS3) domain. Residues Cys-540, His-675, and His-718 each act as for beta-ketoacyl synthase activity in the active site. The region spanning 919–1176 (SKAVYDSSYH…LGPCIWLEAG (258 aa)) is the Malonyl-CoA:ACP transacylase (MAT) domain. The N-terminal hotdog fold stretch occupies residues 1272–1398 (PVIDGLISLE…GTVIVDDERT (127 aa)). Residues 1272–1573 (PVIDGLISLE…FIRTSTSALQ (302 aa)) enclose the PKS/mFAS DH domain. The active-site Proton acceptor; for dehydratase activity is the His-1304. The interval 1416-1573 (TVFSAPRGVA…FIRTSTSALQ (158 aa)) is C-terminal hotdog fold. The active-site Proton donor; for dehydratase activity is the Asp-1475. The Carrier 1 domain maps to 1605–1679 (ANVWSLTVNL…IICERITAQT (75 aa)). Ser-1639 carries the post-translational modification O-(pantetheine 4'-phosphoryl)serine. Positions 1690 to 1720 (GNSTSNTTSSSSQCTPSSSFESDSDTQATEL) are disordered. Residues 1692 to 1710 (STSNTTSSSSQCTPSSSFE) are compositionally biased toward low complexity. A Carrier 2 domain is found at 1721–1797 (SLSAPTMEKV…DLHALVMRRG (77 aa)). Ser-1757 is modified (O-(pantetheine 4'-phosphoryl)serine).

Pantetheine 4'-phosphate is required as a cofactor.

It functions in the pathway secondary metabolite biosynthesis; terpenoid biosynthesis. In terms of biological role, non-reducing polyketide synthase; part of the cluster A that mediates the biosynthesis of chevalone E and its oxidized derivatives that possess a unique five-membered lactone ring and can synergistically enhance the cytotoxicity of doxorubicin (DOX) in breast cancer cells. Within the pathway, cle1 takes part to the biosynthesis of the molecular scaffold via the synthesis the alpha-pyrone triacetic acid lactone (TAL) from one molecule of acetyl-CoA and two molecules of malonyl-CoA. The molecular scaffold is commonly biosynthesized by a series of enzymes including the non-reducing polyketide synthase (NR-PKS) cle1 that produces the alpha-pyrone triacetic acid lactone (TAL); The membrane-bound prenyltransferase cle5 that accepts TAL as its substrate to perform a C-3 geranylgeranylation reaction, in which the pathway-dedicated GGPS cle6 is required to provide GGPP, the other substrate of cle5; the FAD-dependent monooxygenase Cle3 that forms an (S)-epoxide ring at the terminal olefin of the geranylgeranyl group; and the terpene cyclase Cle7 that catalyzes the cyclization of the prenyl group that yields the pentacyclic pathway intermediate chevalone E. Chevalone E can derivatize into seven new oxidized analogs by the cytochrome P450 monooxygenases cle2 (acting at C-20) and cle4 (acting at C-11 and C-12). This is Triacetic acid lactone synthase cle1 from Aspergillus versicolor.